The sequence spans 474 residues: Replication-associated protein (474 aa).

The Nuclear localization signal motif lies at 248 to 255; sequence GKRFQEDR. The segment at 455-474 is disordered; sequence AFAPGFSLTSEPEPKRRRFF.

The protein resides in the host nucleus. Plays an essential for the replication of viral DNA. Presumably cleaves viral genomic dsRNA replicative form to initiate rolling circle replication. This Avon-Heathcote Estuary associated kieseladnavirus (AHEaBV) protein is Replication-associated protein.